The primary structure comprises 305 residues: Beta-lactamase ROB-1 (305 aa).

The first 33 residues, 1–33 (MLNKLKIGTLLLLTLTACSPNSVHSVTSNPQPA), serve as a signal peptide directing secretion. The active-site Acyl-ester intermediate is Ser86. Residue 248–250 (KSG) coordinates substrate.

The protein belongs to the class-A beta-lactamase family.

The catalysed reaction is a beta-lactam + H2O = a substituted beta-amino acid. This Actinobacillus pleuropneumoniae (Haemophilus pleuropneumoniae) protein is Beta-lactamase ROB-1 (rob1).